Consider the following 919-residue polypeptide: Isoleucine--tRNA ligase (919 aa).

Residues 59–69 (PYANGHLHIGH) carry the 'HIGH' region motif. Glutamate 570 contributes to the L-isoleucyl-5'-AMP binding site. The 'KMSKS' region signature appears at 611 to 615 (KMSKS). Lysine 614 is an ATP binding site. Zn(2+)-binding residues include cysteine 893, cysteine 896, cysteine 908, and cysteine 911.

It belongs to the class-I aminoacyl-tRNA synthetase family. IleS type 1 subfamily. As to quaternary structure, monomer. It depends on Zn(2+) as a cofactor.

It localises to the cytoplasm. It carries out the reaction tRNA(Ile) + L-isoleucine + ATP = L-isoleucyl-tRNA(Ile) + AMP + diphosphate. In terms of biological role, catalyzes the attachment of isoleucine to tRNA(Ile). As IleRS can inadvertently accommodate and process structurally similar amino acids such as valine, to avoid such errors it has two additional distinct tRNA(Ile)-dependent editing activities. One activity is designated as 'pretransfer' editing and involves the hydrolysis of activated Val-AMP. The other activity is designated 'posttransfer' editing and involves deacylation of mischarged Val-tRNA(Ile). In Campylobacter curvus (strain 525.92), this protein is Isoleucine--tRNA ligase.